The chain runs to 297 residues: Tyrosine recombinase XerC (297 aa).

In terms of domain architecture, Core-binding (CB) spans 1–83 (MAILDEFDEH…AVKAFTAWAK (83 aa)). Positions 104-291 (TLPAVLRQDQ…AVSRLRVVHD (188 aa)) constitute a Tyr recombinase domain. Residues arginine 148, lysine 172, histidine 243, arginine 246, and histidine 269 contribute to the active site. The active-site O-(3'-phospho-DNA)-tyrosine intermediate is tyrosine 278.

Belongs to the 'phage' integrase family. XerC subfamily. As to quaternary structure, forms a cyclic heterotetrameric complex composed of two molecules of XerC and two molecules of XerD.

The protein localises to the cytoplasm. In terms of biological role, site-specific tyrosine recombinase, which acts by catalyzing the cutting and rejoining of the recombining DNA molecules. The XerC-XerD complex is essential to convert dimers of the bacterial chromosome into monomers to permit their segregation at cell division. It also contributes to the segregational stability of plasmids. The protein is Tyrosine recombinase XerC of Mycobacterium leprae (strain TN).